A 211-amino-acid polypeptide reads, in one-letter code: 3-demethoxyubiquinol 3-hydroxylase (211 aa).

E60, E90, H93, E142, E174, and H177 together coordinate Fe cation.

Belongs to the COQ7 family. The cofactor is Fe cation.

It localises to the cell membrane. It catalyses the reaction a 5-methoxy-2-methyl-3-(all-trans-polyprenyl)benzene-1,4-diol + AH2 + O2 = a 3-demethylubiquinol + A + H2O. The protein operates within cofactor biosynthesis; ubiquinone biosynthesis. Functionally, catalyzes the hydroxylation of 2-nonaprenyl-3-methyl-6-methoxy-1,4-benzoquinol during ubiquinone biosynthesis. This chain is 3-demethoxyubiquinol 3-hydroxylase, found in Acinetobacter baylyi (strain ATCC 33305 / BD413 / ADP1).